We begin with the raw amino-acid sequence, 537 residues long: MRQEELTIHKALPADGDWKSLLFQPLPERDHYETAQGLSFSRLAGQILGTPIDETDYYNELYELSVNDRITILSETLDKTIEPETFQKLQHIHSINQKEKGLSVSRFVAFLDGEKLIAKHSNPLMHRHLRKALMTLLHTFADSHEKGLNHPDFRRVLLDVSKFSLNHLNPWLEKTDIEREMPKVVWYGDATKSQLYFLYYLMLVGCDVLLFHPAGTDQLALVDPKQELGFTEKLPDVSELQPFPKEKPDRKSTVAYRSTKEIEHVLNHEESMLYKPWQFRDHTPVSVTLKTTYDELFLITKERAFIRPNFKADKHSIEIPNVFAKIMGVSKDNKEYWNRLHTLADYQETEMVRSFPFTEEIKSNYQFHYSHALDQEGNIDPDKLMASNVWQYKQLPAGVQTAIAKTISRMCRYPRLKALHQEQVKDVQIYLFKQTTNLPANLLKLIQMFDYAQTVPKLVLYHTEMSGGLTRSDAAALLFLNEIGIDIIIYNPPGHQDIEQFIEEDQYDIHWLDDMVFQQDYKEPSLVKRLFRTITQK.

This is an uncharacterized protein from Bacillus subtilis (strain 168).